Consider the following 166-residue polypeptide: Probable chemoreceptor glutamine deamidase CheD (166 aa).

The protein belongs to the CheD family.

The catalysed reaction is L-glutaminyl-[protein] + H2O = L-glutamyl-[protein] + NH4(+). Its function is as follows. Probably deamidates glutamine residues to glutamate on methyl-accepting chemotaxis receptors (MCPs), playing an important role in chemotaxis. The protein is Probable chemoreceptor glutamine deamidase CheD of Desulforamulus reducens (strain ATCC BAA-1160 / DSM 100696 / MI-1) (Desulfotomaculum reducens).